Here is a 383-residue protein sequence, read N- to C-terminus: MLFPISKQALSCPHFDSCAGCSHQLFVEPPIWREVIENFKETLNPILHQGTLTGWRCRAKLAVRGTKQNPIIGLFKKGSHEALNIPFCLVHHPRINQAVTMIQNWMERHQLNPYQEHSQAGDLRYLQFVVERASGKVQIVFVLNFKDFSSPESQIWRKLLLELAQETTNAFWHSIWVNFNPHATNTIFTDKWEKVWGEPYLWESFDGVKICFQPSNFAQANLDLFEKLLKKVKSWVREKAKVVEFFAGVGTIGLSVAAKCSWIKCEEINPHSKECFYYAKQQLSSEISQKIMFYTGSADENLNLLQGADTVIVDPPRKGLSRKFIEGLTQSSVDQLIYVSCGWDSFKKNKETLISQGWNLKKLEGYSLFPGSEHIELLTLFER.

Residues cysteine 12, cysteine 18, cysteine 21, and cysteine 88 each coordinate [4Fe-4S] cluster. Positions 219, 246, 267, and 314 each coordinate S-adenosyl-L-methionine. Cysteine 341 serves as the catalytic Nucleophile.

The protein belongs to the class I-like SAM-binding methyltransferase superfamily. RNA M5U methyltransferase family.

This is an uncharacterized protein from Protochlamydia amoebophila (strain UWE25).